The primary structure comprises 275 residues: Large ribosomal subunit protein uL2c (275 aa).

Positions 225 to 256 (AMNAVDHPHGGGEGRSPIGRSQPSTPWGRPAL) are disordered.

The protein belongs to the universal ribosomal protein uL2 family. In terms of assembly, part of the 50S ribosomal subunit.

The protein localises to the plastid. The protein resides in the chloroplast. In Cyanidium caldarium (Red alga), this protein is Large ribosomal subunit protein uL2c (rpl2).